An 889-amino-acid polypeptide reads, in one-letter code: Cytoplasmic aconitate hydratase (889 aa).

Residues Q86 and 205–207 (DSH) contribute to the substrate site. [4Fe-4S] cluster is bound by residues C437, C503, and C506. Substrate-binding residues include R536 and R541. T628 is subject to Phosphothreonine. Residues R699 and 779–780 (SR) each bind substrate.

This sequence belongs to the aconitase/IPM isomerase family. Interacts (when associated with the 4Fe-4S) with FBXL5. Interacts with frataxin(81-210). [4Fe-4S] cluster is required as a cofactor.

The protein localises to the cytoplasm. It is found in the cytosol. The enzyme catalyses citrate = D-threo-isocitrate. In terms of biological role, bifunctional iron sensor that switches between 2 activities depending on iron availability. Iron deprivation, promotes its mRNA binding activity through which it regulates the expression of genes involved in iron uptake, sequestration and utilization. Binds to iron-responsive elements (IRES) in the untranslated region of target mRNAs preventing for instance the translation of ferritin and aminolevulinic acid synthase and stabilizing the transferrin receptor mRNA. Its function is as follows. Conversely, when cellular iron levels are high, binds a 4Fe-4S cluster which precludes RNA binding activity and promotes the aconitase activity, the isomerization of citrate to isocitrate via cis-aconitate. This is Cytoplasmic aconitate hydratase (ACO1) from Homo sapiens (Human).